The chain runs to 370 residues: tRNA-specific 2-thiouridylase MnmA (370 aa).

ATP contacts are provided by residues 10 to 17 (AMSGGVDS) and Met-36. The active-site Nucleophile is Cys-111. The cysteines at positions 111 and 209 are disulfide-linked. Position 135 (Gly-135) interacts with ATP. The interaction with tRNA stretch occupies residues 159 to 161 (KDQ). The active-site Cysteine persulfide intermediate is the Cys-209.

It belongs to the MnmA/TRMU family.

The protein resides in the cytoplasm. The catalysed reaction is S-sulfanyl-L-cysteinyl-[protein] + uridine(34) in tRNA + AH2 + ATP = 2-thiouridine(34) in tRNA + L-cysteinyl-[protein] + A + AMP + diphosphate + H(+). Catalyzes the 2-thiolation of uridine at the wobble position (U34) of tRNA, leading to the formation of s(2)U34. The chain is tRNA-specific 2-thiouridylase MnmA from Koribacter versatilis (strain Ellin345).